The following is a 672-amino-acid chain: Synaptotagmin-like protein 4 (672 aa).

Positions 4–122 constitute a RabBD domain; sequence ILDLSFLSEM…KATGDWFYDQ (119 aa). The FYVE-type zinc finger occupies 63–105; sequence CARCQEGLGRLISKSNTCVGCNHLVCRECRVLESNGSWRCKVC. Residues 199 to 222 are disordered; it reads SESLDSYTADSDSTSRRDSLDKSG. Phosphoserine occurs at positions 201, 204, 217, 221, and 274. The region spanning 357 to 479 is the C2 1 domain; the sequence is VTGKIAFSLK…KLDKKLDHCL (123 aa). Serine 489 is modified (phosphoserine). One can recognise a C2 2 domain in the interval 508–634; that stretch reads PASKLPVGGD…ISSGEVVDWM (127 aa).

In terms of assembly, part of a ternary complex containing STX1A and RAB27A. Can bind both dominant negative and dominant active mutants of RAB27A. Binds STXBP1, RAB3A, RAB8A and RAB27B. Interacts with MYO5A. In terms of tissue distribution, detected in insulin-secreting cell lines.

The protein resides in the membrane. The protein localises to the cytoplasmic vesicle. Its subcellular location is the secretory vesicle membrane. In terms of biological role, modulates exocytosis of dense-core granules and secretion of hormones in the pancreas and the pituitary. Interacts with vesicles containing negatively charged phospholipids in a Ca(2+)-independent manner. This Rattus norvegicus (Rat) protein is Synaptotagmin-like protein 4 (Sytl4).